The following is a 317-amino-acid chain: MLNVTLLGSGGGMPMPERHLSSLMINYKGRKILVDCGEGTQVAIRKMNAGFKSIDIICITHVHGDHIFGIPGLLSTMGNSQRLDPVTIVGPKGISDVMRGLLLSIKQLPYSIEIIEDPKGKLGITNTEQGLKIKEQKDGMNDEITVSTLELDHSAPCFGYSFYLNRRPKFEPEKAIKNDVPRLIWSKLQKGETIVAGDRKYSPDLVLGEQRRGIKLTYITDTRPTKDIPQWINQSDLFICEGTYGDNDDMDKAIKNKHMTFMEAGELAKKGKVKELLLTHFSPALKEPNFYEHNAKKEFAHTTIGYDGYRKNIEYKN.

His61, His63, Asp65, His66, His153, Asp221, and His280 together coordinate Zn(2+). The active-site Proton acceptor is Asp65.

Belongs to the RNase Z family. As to quaternary structure, homodimer. Zn(2+) serves as cofactor.

The enzyme catalyses Endonucleolytic cleavage of RNA, removing extra 3' nucleotides from tRNA precursor, generating 3' termini of tRNAs. A 3'-hydroxy group is left at the tRNA terminus and a 5'-phosphoryl group is left at the trailer molecule.. Functionally, zinc phosphodiesterase, which displays some tRNA 3'-processing endonuclease activity. Probably involved in tRNA maturation, by removing a 3'-trailer from precursor tRNA. In Alkaliphilus oremlandii (strain OhILAs) (Clostridium oremlandii (strain OhILAs)), this protein is Ribonuclease Z.